The following is a 250-amino-acid chain: Probable aquaporin TIP-type (250 aa).

The next 2 helical transmembrane spans lie at 22-42 (AGLA…GSGI) and 56-76 (AGLI…VSVG). An NPA 1 motif is present at residues 85 to 87 (NPA). Helical transmembrane passes span 104 to 124 (IVYI…LVFV), 138 to 158 (VGVG…VYTV), and 170 to 190 (IGII…LVGG). Positions 198–200 (NPA) match the NPA 2 motif. A helical membrane pass occupies residues 218–238 (YWAGPLIGGGIAGLVYEVLFI).

Belongs to the MIP/aquaporin (TC 1.A.8) family. TIP (TC 1.A.8.10) subfamily.

The protein localises to the membrane. Functionally, aquaporins facilitate the transport of water and small neutral solutes across cell membranes. May have a role in buffering osmotic fluctations in the highly compartmented vacuole of arbuscule cells. This chain is Probable aquaporin TIP-type (AQP1), found in Medicago truncatula (Barrel medic).